We begin with the raw amino-acid sequence, 154 residues long: 3-dehydroquinate dehydratase (154 aa).

The Proton acceptor role is filled by tyrosine 23. 3 residues coordinate substrate: asparagine 74, histidine 80, and aspartate 87. The Proton donor role is filled by histidine 100. Residues 101 to 102 and arginine 111 each bind substrate; that span reads LS.

This sequence belongs to the type-II 3-dehydroquinase family. In terms of assembly, homododecamer.

It catalyses the reaction 3-dehydroquinate = 3-dehydroshikimate + H2O. The protein operates within metabolic intermediate biosynthesis; chorismate biosynthesis; chorismate from D-erythrose 4-phosphate and phosphoenolpyruvate: step 3/7. In terms of biological role, catalyzes a trans-dehydration via an enolate intermediate. This Actinobacillus pleuropneumoniae serotype 5b (strain L20) protein is 3-dehydroquinate dehydratase.